Here is a 195-residue protein sequence, read N- to C-terminus: Imidazoleglycerol-phosphate dehydratase (195 aa).

Belongs to the imidazoleglycerol-phosphate dehydratase family.

The protein localises to the cytoplasm. It catalyses the reaction D-erythro-1-(imidazol-4-yl)glycerol 3-phosphate = 3-(imidazol-4-yl)-2-oxopropyl phosphate + H2O. It participates in amino-acid biosynthesis; L-histidine biosynthesis; L-histidine from 5-phospho-alpha-D-ribose 1-diphosphate: step 6/9. This Paraburkholderia xenovorans (strain LB400) protein is Imidazoleglycerol-phosphate dehydratase.